Reading from the N-terminus, the 63-residue chain is Large ribosomal subunit protein bL28 (63 aa).

Belongs to the bacterial ribosomal protein bL28 family.

This Alkaliphilus oremlandii (strain OhILAs) (Clostridium oremlandii (strain OhILAs)) protein is Large ribosomal subunit protein bL28.